The primary structure comprises 863 residues: Transforming growth factor-beta receptor-associated protein 1 homolog (863 aa).

A CNH domain is found at R23–V297. A CHCR repeat occupies R564 to V729.

It belongs to the TRAP1 family. Component of the putative class C core vacuole/endosome tethering (CORVET) complex.

The protein localises to the cytoplasm. Its subcellular location is the early endosome. Its function is as follows. Plays a role in the TGF-beta signaling pathway. Functionally, plays a role in vesicle-mediated protein trafficking of the endocytic membrane transport pathway. Believed to act as a component of the putative CORVET endosomal tethering complexes which is proposed to be involved in the Rab5-to-Rab7 endosome conversion probably implicating MON1A/B, and via binding SNAREs and SNARE complexes to mediate tethering and docking events during SNARE-mediated membrane fusion. The CORVET complex is proposed to function as a Rab5 effector to mediate early endosome fusion probably in specific endosome subpopulations. This is Transforming growth factor-beta receptor-associated protein 1 homolog (tgfbrap1) from Danio rerio (Zebrafish).